The sequence spans 629 residues: tRNA uridine 5-carboxymethylaminomethyl modification enzyme MnmG (629 aa).

Residues 14 to 19, valine 126, and serine 181 contribute to the FAD site; that span reads GAGHAG. 273 to 287 provides a ligand contact to NAD(+); sequence GPRYCPSIEDKVVRF. Position 370 (glutamine 370) interacts with FAD.

The protein belongs to the MnmG family. As to quaternary structure, homodimer. Heterotetramer of two MnmE and two MnmG subunits. Requires FAD as cofactor.

Its subcellular location is the cytoplasm. In terms of biological role, NAD-binding protein involved in the addition of a carboxymethylaminomethyl (cmnm) group at the wobble position (U34) of certain tRNAs, forming tRNA-cmnm(5)s(2)U34. In Bacillus cereus (strain ZK / E33L), this protein is tRNA uridine 5-carboxymethylaminomethyl modification enzyme MnmG.